The chain runs to 399 residues: MSFNREHDLKLKFKSSKKLKISATFESMDLKEGLLRGIYSYGFEAPSAIQSRAITQIISGKDVIAQAQSGTGKTATFTIGMLQAIDLKKHDLQALVLSPTRELAAQIGKVVTNLGDYMNVKAYAMTGGKTMKDDLKKIQKHGCQVISGTPGRVLDMIKRRLIETRHVQILVLDEADELLSDTLGFKHQIYDIFTKLPRTSQVVVVSATMSPEILEITKKFMNDPVKILVKRDEITLEGIKQYYVNVEKEEWKFDTLCDIYDSLTITQCVIFCNSKKKVDWLAHKLKQSNFAVISMHGDMKQDERDRVMNEFRTGQSRVLISTDVWARGIDVQQVSLVINYDLPEITENYVHRIGRSGRFGRKGVAINFLTKIDASRMKEIEKYYKIKVKPMPADLSELS.

Positions 23 to 51 (ATFESMDLKEGLLRGIYSYGFEAPSAIQS) match the Q motif motif. The region spanning 54–227 (ITQIISGKDV…KKFMNDPVKI (174 aa)) is the Helicase ATP-binding domain. 67-74 (AQSGTGKT) is an ATP binding site. The DEAD box signature appears at 173–176 (DEAD). The Helicase C-terminal domain maps to 238–399 (GIKQYYVNVE…PMPADLSELS (162 aa)).

This sequence belongs to the DEAD box helicase family. DDX48/FAL1 subfamily.

It is found in the nucleus. The protein resides in the nucleolus. It carries out the reaction ATP + H2O = ADP + phosphate + H(+). Functionally, ATP-dependent RNA helicase involved in 40S ribosomal subunit biogenesis. Required for the processing and cleavage of 35S pre-rRNA at sites A0, A1, and A2, leading to mature 18S rRNA. This is ATP-dependent RNA helicase FAL1 (FAL1) from Candida glabrata (strain ATCC 2001 / BCRC 20586 / JCM 3761 / NBRC 0622 / NRRL Y-65 / CBS 138) (Yeast).